The sequence spans 73 residues: Large ribosomal subunit protein bL31 (73 aa).

It belongs to the bacterial ribosomal protein bL31 family. Type A subfamily. As to quaternary structure, part of the 50S ribosomal subunit.

In terms of biological role, binds the 23S rRNA. The polypeptide is Large ribosomal subunit protein bL31 (rpmE) (Ruegeria pomeroyi (strain ATCC 700808 / DSM 15171 / DSS-3) (Silicibacter pomeroyi)).